The sequence spans 279 residues: Undecaprenyl-diphosphatase (279 aa).

The next 7 membrane-spanning stretches (helical) occupy residues 10–30 (FICFKSIFLGIIQGFTEFLPI), 48–68 (LGVSFSASIQLGSAVAIIYYF), 96–116 (LFLYIFVASIPILVFGLLIKL), 128–148 (GLFSIAITSIVMALLLALSEI), 203–223 (SFLVGIPAVSISGLVELFSLF), 229–249 (IDIIPIIIGIISSFFSSIFAI), and 259–279 (NNTLVFVYYRLAFGIFILTTL).

The protein belongs to the UppP family.

The protein resides in the cell inner membrane. It catalyses the reaction di-trans,octa-cis-undecaprenyl diphosphate + H2O = di-trans,octa-cis-undecaprenyl phosphate + phosphate + H(+). Functionally, catalyzes the dephosphorylation of undecaprenyl diphosphate (UPP). Confers resistance to bacitracin. The polypeptide is Undecaprenyl-diphosphatase (Prochlorococcus marinus (strain NATL2A)).